The sequence spans 344 residues: MRILEFDEKRQAAKLHIESEDDLWILHLILEKGDKVVAKTTRDIGLGKESRRIPMTIVLKVDYTEFQEFTNRLRIHGIIEDAPERFGIRGAHHTINLDIGDEIIIIKQQWSKYALDKLKKQADKRSKIIIALVDFDEYLIAIPFEQGIKILSEKSLRSLNEEEGIIEQNALEVATELAEYVKQYNPDAILLAGPGFFKEEVAKKVNNILKNKKVYIDSVSSATRAGLHEILKRDIIDKIMSDYEIAIGAKKMEKAMELLAKQPELVTYGLEQVKNAVEMGAVETVLLIEDLLSSNNQERLAIERILGDIENKRGEIILVPKESPIYFELKNLTGILAILRFRIN.

The protein belongs to the eukaryotic release factor 1 family. Pelota subfamily. As to quaternary structure, monomer. It depends on a divalent metal cation as a cofactor.

The protein resides in the cytoplasm. May function in recognizing stalled ribosomes, interact with stem-loop structures in stalled mRNA molecules, and effect endonucleolytic cleavage of the mRNA. May play a role in the release non-functional ribosomes and degradation of damaged mRNAs. Has endoribonuclease activity. The chain is Protein pelota homolog from Saccharolobus islandicus (strain M.16.27) (Sulfolobus islandicus).